A 501-amino-acid chain; its full sequence is Cytochrome P450 monooxygenase janQ (501 aa).

A helical transmembrane segment spans residues methionine 1–arginine 16. Residue asparagine 132 is glycosylated (N-linked (GlcNAc...) asparagine). Heme is bound at residue cysteine 439.

Belongs to the cytochrome P450 family. It depends on heme as a cofactor.

The protein resides in the membrane. It functions in the pathway secondary metabolite biosynthesis. Cytochrome P450 monooxygenase; part of the gene cluster that mediates the biosynthesis of the indole diterpenes janthitremanes such as shearinine K or shearinine A. The geranylgeranyl diphosphate (GGPP) synthase janG catalyzes the first step in janthitremane biosynthesis via conversion of farnesyl pyrophosphate and isopentyl pyrophosphate into geranylgeranyl pyrophosphate (GGPP). Condensation of indole-3-glycerol phosphate with GGPP by the prenyl transferase janC then forms 3-geranylgeranylindole (3-GGI). Epoxidation by the FAD-dependent monooxygenase janM leads to a epoxidized-GGI that is substrate of the terpene cyclase janB for cyclization to yield paspaline. Paspaline is subsequently converted to 13-desoxypaspaline by the cytochrome P450 monooxygenase janP, via beta-PC-M6 in a series of alpha-face oxidations. The cytochrome P450 monooxygenase janQ is proposed to carry out sequential beta-face oxidation steps at C-7 and C-13 of 13-desoxypaspaline to form paspalicine and paspalinine respectively. The indole diterpene prenyltransferase janD may then convert paspalinine into shearinine K which is substrate of janO and/or additional enzymes for oxidation and cyclization to generate shearinine A. This Penicillium janthinellum (Penicillium vitale) protein is Cytochrome P450 monooxygenase janQ.